Reading from the N-terminus, the 113-residue chain is Large ribosomal subunit protein uL24 (113 aa).

It belongs to the universal ribosomal protein uL24 family. As to quaternary structure, part of the 50S ribosomal subunit.

Its function is as follows. One of two assembly initiator proteins, it binds directly to the 5'-end of the 23S rRNA, where it nucleates assembly of the 50S subunit. Functionally, one of the proteins that surrounds the polypeptide exit tunnel on the outside of the subunit. This is Large ribosomal subunit protein uL24 from Chlamydia abortus (strain DSM 27085 / S26/3) (Chlamydophila abortus).